The primary structure comprises 1039 residues: Potassium-transporting ATPase alpha chain 2 (1039 aa).

Residues 1 to 102 (MHQKTPEIYS…NSLTPPKQTP (102 aa)) lie on the Cytoplasmic side of the membrane. A helical membrane pass occupies residues 103 to 123 (EIVKFLKQMVGGFSILLWVGA). Residues 124 to 146 (FLCWIAYGIQYSSDKSASLNNVY) are Lumenal-facing. Residues 147-167 (LGCVLGLVVILTGIFAYYQEA) traverse the membrane as a helical segment. The Cytoplasmic portion of the chain corresponds to 168-303 (KSTNIMSSFN…NEKTPIAIEI (136 aa)). Residues 304–323 (EHFVHIVAGVAVSIGILFFI) form a helical membrane-spanning segment. Topologically, residues 324 to 335 (IAVSLKYQVLDS) are lumenal. Residues 336–353 (IIFLIGIIVANVPEGLLA) traverse the membrane as a helical segment. Residues 354-787 (TVTVTLSLTA…EEGRLIFDNL (434 aa)) are Cytoplasmic-facing. D391 acts as the 4-aspartylphosphate intermediate in catalysis. Mg(2+) contacts are provided by D732 and D736. The helical transmembrane segment at 788–807 (KKTIAYSLTKNIAELCPFLI) threads the bilayer. Residues 808–817 (YIIVGLPLPI) are Lumenal-facing. Residues 818 to 838 (GTITILFIDLGTDIIPSIALA) traverse the membrane as a helical segment. Over 839–858 (YEKAESDIMNRKPRHKNKDR) the chain is Cytoplasmic. Residues 859 to 881 (LVNQPLAVYSYLHIGLMQALGAF) traverse the membrane as a helical segment. The Lumenal portion of the chain corresponds to 882–933 (LVYFTVYAQEGFLPRTLINLRVEWEKDYVNDLKDSYGQEWTRYQREYLEWTG). A helical transmembrane segment spans residues 934-953 (YTAFFVGILVQQIADLIIRK). The Cytoplasmic segment spans residues 954 to 967 (TRRNSIFQQGLFRN). Position 958 is a phosphoserine; by PKA (S958). Residues 968 to 986 (KVIWVGITSQIIIGLILSY) traverse the membrane as a helical segment. At 987–1001 (GLGSVTALSFTMLRA) the chain is on the lumenal side. Residues 1002 to 1022 (QYWFVAVPHAILIWVYDEVRK) form a helical membrane-spanning segment. Over 1023–1039 (LFIRLYPGSWWDKNMYY) the chain is Cytoplasmic.

It belongs to the cation transport ATPase (P-type) (TC 3.A.3) family. Type IIC subfamily. The ATPase pump is composed of a catalytic alpha subunit and an auxiliary non-catalytic beta subunit. The alpha subunit pairs with the beta subunit of gastric H(+)/K(+) ATPase ATP4B or the beta subunit of Na(+)/K(+) ATPases ATP1B1 and ATP1B3; this interaction is required for the formation of a functionally active pump and its targeting at the plasma membrane. Expressed in airway epithelial cells (at protein level). Found in skin and kidney. Detected in prostate basal cells (at protein level). Expression is increased in benign prostate hyperplasia and tumor tissues (at protein level).

Its subcellular location is the apical cell membrane. It catalyses the reaction K(+)(out) + ATP + H2O + H(+)(in) = K(+)(in) + ADP + phosphate + 2 H(+)(out). It carries out the reaction K(+)(out) + Na(+)(in) + ATP + H2O = K(+)(in) + Na(+)(out) + ADP + phosphate + H(+). Its activity is regulated as follows. The ATPase activity is regulated by monovalent cations and pH. Up-regulated by K(+) ions in a dose-dependent way. Down-regulated by Na(+) ions. Inhibited by Na(+)/K(+)-ATPase inhibitor ouabain and H(+)/K(+)-ATPase inhibitor SCH-28080 with an intermediate sensitivity to completely resistant Na(+)/K(+)-ATPases and highly sensitive H(+)/K(+)-ATPases. Functionally, the catalytic subunit of a H(+)/K(+) ATPase and/or Na(+)/K(+) ATPase pump which transports K(+) ions in exchange for Na(+) and/or H(+) ions across the apical membrane of epithelial cells. Uses ATP as an energy source to pump K(+) ions into the cell while transporting Na(+) and/or H(+) ions to the extracellular compartment. Involved in the maintenance of electrolyte homeostasis through K(+) ion absorption in kidney and colon. In the airway epithelium, may play a primary role in mucus acidification regulating its viscosity and clearance. The chain is Potassium-transporting ATPase alpha chain 2 from Homo sapiens (Human).